We begin with the raw amino-acid sequence, 1184 residues long: Nucleolar protein 6 (1184 aa).

The segment covering 1-10 (MGRIKEKESK) has biased composition (basic and acidic residues). Disordered stretches follow at residues 1–42 (MGRI…NRVP) and 1133–1184 (REQR…NALC).

The protein belongs to the NRAP family. In terms of assembly, part of the small subunit (SSU) processome, composed of more than 70 proteins and the RNA chaperone small nucleolar RNA (snoRNA) U3.

The protein resides in the nucleus. It localises to the nucleolus. Its subcellular location is the chromosome. Its function is as follows. Part of the small subunit (SSU) processome, first precursor of the small eukaryotic ribosomal subunit. During the assembly of the SSU processome in the nucleolus, many ribosome biogenesis factors, an RNA chaperone and ribosomal proteins associate with the nascent pre-rRNA and work in concert to generate RNA folding, modifications, rearrangements and cleavage as well as targeted degradation of pre-ribosomal RNA by the RNA exosome. This chain is Nucleolar protein 6, found in Drosophila virilis (Fruit fly).